Reading from the N-terminus, the 331-residue chain is Probable staphylococcal-like nuclease CAN1 (331 aa).

The N-myristoyl glycine moiety is linked to residue Gly2. Cys10 is lipidated: S-palmitoyl cysteine. Residues 136–313 form the TNase-like domain; that stretch reads HTLPVDAKAV…QSGRKGLWAA (178 aa). Asp149 lines the Ca(2+) pocket. Arg220 is an active-site residue. Asp225 is a Ca(2+) binding site. Catalysis depends on residues Glu228 and Arg262. The interval 306–331 is disordered; sequence GRKGLWAASRPQKPWEWRRDKRNGTA. Positions 318–331 are enriched in basic and acidic residues; the sequence is KPWEWRRDKRNGTA.

Belongs to the thermonuclease family. Ca(2+) is required as a cofactor.

Its subcellular location is the cell membrane. Its function is as follows. Enzyme that catalyzes the hydrolysis of both DNA and RNA at the 5' position of the phosphodiester bond. This Oryza sativa subsp. japonica (Rice) protein is Probable staphylococcal-like nuclease CAN1.